The primary structure comprises 249 residues: Probable transcriptional regulatory protein A1S_1496 (249 aa).

This sequence belongs to the TACO1 family.

The protein resides in the cytoplasm. The polypeptide is Probable transcriptional regulatory protein A1S_1496 (Acinetobacter baumannii (strain ATCC 17978 / DSM 105126 / CIP 53.77 / LMG 1025 / NCDC KC755 / 5377)).